A 230-amino-acid polypeptide reads, in one-letter code: Urease accessory protein UreF (230 aa).

This sequence belongs to the UreF family. In terms of assembly, ureD, UreF and UreG form a complex that acts as a GTP-hydrolysis-dependent molecular chaperone, activating the urease apoprotein by helping to assemble the nickel containing metallocenter of UreC. The UreE protein probably delivers the nickel.

Its subcellular location is the cytoplasm. Required for maturation of urease via the functional incorporation of the urease nickel metallocenter. This is Urease accessory protein UreF from Cupriavidus taiwanensis (strain DSM 17343 / BCRC 17206 / CCUG 44338 / CIP 107171 / LMG 19424 / R1) (Ralstonia taiwanensis (strain LMG 19424)).